A 393-amino-acid chain; its full sequence is Anhydro-N-acetylmuramic acid kinase (393 aa).

9-16 (GTSADGVD) lines the ATP pocket.

The protein belongs to the anhydro-N-acetylmuramic acid kinase family.

It carries out the reaction 1,6-anhydro-N-acetyl-beta-muramate + ATP + H2O = N-acetyl-D-muramate 6-phosphate + ADP + H(+). It participates in amino-sugar metabolism; 1,6-anhydro-N-acetylmuramate degradation. It functions in the pathway cell wall biogenesis; peptidoglycan recycling. In terms of biological role, catalyzes the specific phosphorylation of 1,6-anhydro-N-acetylmuramic acid (anhMurNAc) with the simultaneous cleavage of the 1,6-anhydro ring, generating MurNAc-6-P. Is required for the utilization of anhMurNAc either imported from the medium or derived from its own cell wall murein, and thus plays a role in cell wall recycling. This chain is Anhydro-N-acetylmuramic acid kinase, found in Acidithiobacillus ferrooxidans (strain ATCC 23270 / DSM 14882 / CIP 104768 / NCIMB 8455) (Ferrobacillus ferrooxidans (strain ATCC 23270)).